The following is a 77-amino-acid chain: Cysteine-rich protein 1 (77 aa).

Residues 2-63 (PKCPKCSKEV…HPCYAAMFGP (62 aa)) form the LIM zinc-binding domain. Residues K9 and K22 each carry the N6-acetyllysine modification. An Omega-N-methylarginine modification is found at R68.

Seems to have a role in zinc absorption and may function as an intracellular zinc transport protein. The protein is Cysteine-rich protein 1 (CRIP1) of Bos taurus (Bovine).